The sequence spans 1873 residues: SAGA complex subunit Spt20 (1873 aa).

It belongs to the SPT20 family. In terms of assembly, component of the Spt-Ada-Gcn5 acetyltransferase (SAGA) complex consisting of wda/Taf5L, Saf6, Taf9, Taf10b, Taf12, Ada1, Spt3, Spt7, Spt20, Sf3b3, Sf3b5, Nipped-A/Tra1, a histone acetyltransferase (HAT) module made up of Gcn5, Ada2b (Isoform B), Ada3 and Sgf29, and a deubiquitinase (DUB) module made up of not/nonstop, Sgf11 and e(y)2 tethered to SAGA by Atxn7.

It is found in the nucleus. Functionally, component of the transcription regulatory complex SAGA, a multiprotein complex that activates transcription by remodeling chromatin and mediating histone acetylation and deubiquitination. The SAGA complex predominantly acetylates histone H3. This Drosophila melanogaster (Fruit fly) protein is SAGA complex subunit Spt20.